A 377-amino-acid polypeptide reads, in one-letter code: Homoserine O-succinyltransferase (377 aa).

Residues 50–359 (NAVLVCHALS…SSHGHDSFLM (310 aa)) form the AB hydrolase-1 domain. Serine 156 serves as the catalytic Nucleophile. Arginine 226 provides a ligand contact to substrate. Catalysis depends on residues aspartate 321 and histidine 354. Aspartate 355 contributes to the substrate binding site.

It belongs to the AB hydrolase superfamily. MetX family. Homodimer.

Its subcellular location is the cytoplasm. The catalysed reaction is L-homoserine + succinyl-CoA = O-succinyl-L-homoserine + CoA. The protein operates within amino-acid biosynthesis; L-methionine biosynthesis via de novo pathway; O-succinyl-L-homoserine from L-homoserine: step 1/1. In terms of biological role, transfers a succinyl group from succinyl-CoA to L-homoserine, forming succinyl-L-homoserine. This chain is Homoserine O-succinyltransferase, found in Nitrosospira multiformis (strain ATCC 25196 / NCIMB 11849 / C 71).